We begin with the raw amino-acid sequence, 228 residues long: UPF0758 protein CLI_3057 (228 aa).

The MPN domain maps to 106–228; it reads KINTPLDVSN…YVSMKEKGTI (123 aa). Residues histidine 177, histidine 179, and aspartate 190 each coordinate Zn(2+). Positions 177–190 match the JAMM motif motif; that stretch reads HNHPSGDPTPSKED.

This sequence belongs to the UPF0758 family.

The protein is UPF0758 protein CLI_3057 of Clostridium botulinum (strain Langeland / NCTC 10281 / Type F).